Reading from the N-terminus, the 472-residue chain is Adenosylhomocysteinase (472 aa).

Substrate-binding residues include T63, D138, and E198. Position 199-201 (199-201) interacts with NAD(+); that stretch reads TTT. 2 residues coordinate substrate: K228 and D232. NAD(+) contacts are provided by residues N233, 262–267, E285, N320, 341–343, and N386; these read GYGDVG and IGH.

This sequence belongs to the adenosylhomocysteinase family. NAD(+) serves as cofactor.

The protein localises to the cytoplasm. It catalyses the reaction S-adenosyl-L-homocysteine + H2O = L-homocysteine + adenosine. It functions in the pathway amino-acid biosynthesis; L-homocysteine biosynthesis; L-homocysteine from S-adenosyl-L-homocysteine: step 1/1. Functionally, may play a key role in the regulation of the intracellular concentration of adenosylhomocysteine. This chain is Adenosylhomocysteinase, found in Methylococcus capsulatus (strain ATCC 33009 / NCIMB 11132 / Bath).